The chain runs to 588 residues: Probable G-protein coupled receptor 162 (588 aa).

The Extracellular segment spans residues 1 to 17 (MARGGAGAEEASLRSNA). The helical transmembrane segment at 18-38 (LSWLACGLLALLANAWIILSI) threads the bilayer. Residues 39–49 (SAKQQKHKPLE) lie on the Cytoplasmic side of the membrane. Residues 50–70 (LLLCFLAGTHILMAAVPLTTF) form a helical membrane-spanning segment. Topologically, residues 71-91 (AVVQLRRQASSDYDWNESICK) are extracellular. The N-linked (GlcNAc...) asparagine glycan is linked to N86. A helical transmembrane segment spans residues 92–112 (VFVSTYYTLALATCFTVASLS). Residues 113–133 (YHRMWMVRWPVNYRLSNAKKQ) lie on the Cytoplasmic side of the membrane. The chain crosses the membrane as a helical span at residues 134-154 (ALHAVMGIWMVSFILSTLPSI). The Extracellular segment spans residues 155–174 (GWHNNGERYYARGCQFIVSK). The helical transmembrane segment at 175–195 (IGLGFGVCFSLLLLGGIVMGL) threads the bilayer. At 196–275 (VCVAITFYQT…SLQVTNLVSA (80 aa)) the chain is on the cytoplasmic side. A helical membrane pass occupies residues 276-296 (IVFLYDSLTGVPILVVSFFSL). Topologically, residues 297–303 (KSDSAPP) are extracellular. The chain crosses the membrane as a helical span at residues 304–324 (WMVLAVLWCSMAQTLLLPSFI). At 325–588 (WSCERYRADV…GNPIFPQLTL (264 aa)) the chain is on the cytoplasmic side. Residues S413 and S435 each carry the phosphoserine modification. 2 disordered regions span residues 445 to 474 (QSRA…AEGG) and 511 to 550 (ETPL…AVGL). Over residues 530–546 (PLGLSPRRLSLGSPESR) the composition is skewed to low complexity.

It belongs to the G-protein coupled receptor 1 family.

Its subcellular location is the cell membrane. In terms of biological role, orphan receptor. The polypeptide is Probable G-protein coupled receptor 162 (GPR162) (Homo sapiens (Human)).